The primary structure comprises 401 residues: Imidazolonepropionase (401 aa).

Residues H70 and H72 each contribute to the Fe(3+) site. H70 and H72 together coordinate Zn(2+). Residues R79, Y142, and H175 each contribute to the 4-imidazolone-5-propanoate site. Residue Y142 participates in N-formimidoyl-L-glutamate binding. Residue H240 participates in Fe(3+) binding. H240 provides a ligand contact to Zn(2+). Q243 provides a ligand contact to 4-imidazolone-5-propanoate. D315 contributes to the Fe(3+) binding site. A Zn(2+)-binding site is contributed by D315. N317 and G319 together coordinate N-formimidoyl-L-glutamate. Position 320 (T320) interacts with 4-imidazolone-5-propanoate.

This sequence belongs to the metallo-dependent hydrolases superfamily. HutI family. Zn(2+) serves as cofactor. Fe(3+) is required as a cofactor.

It localises to the cytoplasm. It carries out the reaction 4-imidazolone-5-propanoate + H2O = N-formimidoyl-L-glutamate. It participates in amino-acid degradation; L-histidine degradation into L-glutamate; N-formimidoyl-L-glutamate from L-histidine: step 3/3. In terms of biological role, catalyzes the hydrolytic cleavage of the carbon-nitrogen bond in imidazolone-5-propanoate to yield N-formimidoyl-L-glutamate. It is the third step in the universal histidine degradation pathway. This Caulobacter vibrioides (strain ATCC 19089 / CIP 103742 / CB 15) (Caulobacter crescentus) protein is Imidazolonepropionase.